We begin with the raw amino-acid sequence, 398 residues long: MAKLTVKDLDLKGKKVLVRVDFNVPLKNGVITNDNRISAALPTIKYIIEHGGRAILFSHLGRVKEEADKEGKSLAPVAKNLAEKLGQEVIFPGSTRGAELEAAIDALEDGQVLLVENTRFEDIDGKKESKNDPELGKYWASLGEGIFVNDAFGTAHRAHASNVGISANVEKAVAGFLLENEIAYIKEAVETPERPFVAILGGSKVSDKIGVIENLLEKADKVLIGGGMTYTFYKAQGIEIGNSLCEEDKLDVAKSLLEKSNGKLVLPVDSKEANAFADYTEVKVTEGEAVDTGFLGLDIGPKSIAKFDEALTGAKTVVWNGPMGVFENPDFQEGTIGVMDAIVKQPGVKSIIGGGDSAAAAINLGRADKFSWISTGGGASMELLEGKELPGLAALTEK.

Substrate-binding positions include 21 to 23 (DFN), arginine 36, 59 to 62 (HLGR), arginine 119, and arginine 157. Residues lysine 208, glycine 296, glutamate 327, and 354-357 (GGDS) contribute to the ATP site.

This sequence belongs to the phosphoglycerate kinase family. Monomer.

Its subcellular location is the cytoplasm. It catalyses the reaction (2R)-3-phosphoglycerate + ATP = (2R)-3-phospho-glyceroyl phosphate + ADP. It participates in carbohydrate degradation; glycolysis; pyruvate from D-glyceraldehyde 3-phosphate: step 2/5. The sequence is that of Phosphoglycerate kinase from Streptococcus equi subsp. equi (strain 4047).